The following is a 208-amino-acid chain: Exosome complex component CSL4 homolog (208 aa).

As to quaternary structure, component of the RNA exosome complex. Ubiquitously expressed.

Its subcellular location is the nucleus. The protein resides in the nucleolus. It is found in the nucleoplasm. In terms of biological role, non-catalytic component of the RNA exosome complex which has 3'-&gt;5' exoribonuclease activity and participates in a multitude of cellular RNA processing and degradation events. Involved in regulation of antisense ribosomal siRNA production. Involved in response to cold-warm shock. This Caenorhabditis elegans protein is Exosome complex component CSL4 homolog.